The sequence spans 94 residues: MICOS complex subunit MIC12 (94 aa).

A helical transmembrane segment spans residues 7-23 (YGSFSVVASVLGASYYY).

Belongs to the MICOS complex subunit Mic12 family. Component of the mitochondrial contact site and cristae organizing system (MICOS) complex.

It localises to the mitochondrion inner membrane. In terms of biological role, component of the MICOS complex, a large protein complex of the mitochondrial inner membrane that plays crucial roles in the maintenance of crista junctions, inner membrane architecture, and formation of contact sites to the outer membrane. The protein is MICOS complex subunit MIC12 (AIM5) of Eremothecium gossypii (strain ATCC 10895 / CBS 109.51 / FGSC 9923 / NRRL Y-1056) (Yeast).